The primary structure comprises 350 residues: Lipoyl synthase (350 aa).

Positions 1-39 (MSDTSSPKPVASGEKFRTAQGITAIKDGQKRRASAEPQV) are disordered. [4Fe-4S] cluster-binding residues include Cys73, Cys78, Cys84, Cys99, Cys103, Cys106, and Ser314. The region spanning 85–303 (WSNGTATIML…RDIGLEKGFM (219 aa)) is the Radical SAM core domain.

It belongs to the radical SAM superfamily. Lipoyl synthase family. [4Fe-4S] cluster serves as cofactor.

The protein localises to the cytoplasm. It carries out the reaction [[Fe-S] cluster scaffold protein carrying a second [4Fe-4S](2+) cluster] + N(6)-octanoyl-L-lysyl-[protein] + 2 oxidized [2Fe-2S]-[ferredoxin] + 2 S-adenosyl-L-methionine + 4 H(+) = [[Fe-S] cluster scaffold protein] + N(6)-[(R)-dihydrolipoyl]-L-lysyl-[protein] + 4 Fe(3+) + 2 hydrogen sulfide + 2 5'-deoxyadenosine + 2 L-methionine + 2 reduced [2Fe-2S]-[ferredoxin]. It participates in protein modification; protein lipoylation via endogenous pathway; protein N(6)-(lipoyl)lysine from octanoyl-[acyl-carrier-protein]: step 2/2. Functionally, catalyzes the radical-mediated insertion of two sulfur atoms into the C-6 and C-8 positions of the octanoyl moiety bound to the lipoyl domains of lipoate-dependent enzymes, thereby converting the octanoylated domains into lipoylated derivatives. The polypeptide is Lipoyl synthase (Ectopseudomonas mendocina (strain ymp) (Pseudomonas mendocina)).